A 46-amino-acid polypeptide reads, in one-letter code: Diuretic hormone (46 aa).

Ile-46 carries the post-translational modification Isoleucine amide.

The protein belongs to the sauvagine/corticotropin-releasing factor/urotensin I family.

The protein resides in the secreted. In terms of biological role, regulation of fluid secretion. Stimulates primary urine secretion by Malpighian tubules and causes a dose-dependent stimulation of cAMP levels in the tubules. The protein is Diuretic hormone of Acheta domesticus (House cricket).